A 353-amino-acid polypeptide reads, in one-letter code: Uroporphyrinogen decarboxylase (353 aa).

Substrate-binding positions include 29–33, Asp78, Tyr154, Ser209, and His322; that span reads RQAGR.

Belongs to the uroporphyrinogen decarboxylase family. Homodimer.

The protein resides in the cytoplasm. It carries out the reaction uroporphyrinogen III + 4 H(+) = coproporphyrinogen III + 4 CO2. It participates in porphyrin-containing compound metabolism; protoporphyrin-IX biosynthesis; coproporphyrinogen-III from 5-aminolevulinate: step 4/4. Its function is as follows. Catalyzes the decarboxylation of four acetate groups of uroporphyrinogen-III to yield coproporphyrinogen-III. The chain is Uroporphyrinogen decarboxylase from Bacillus velezensis (strain DSM 23117 / BGSC 10A6 / LMG 26770 / FZB42) (Bacillus amyloliquefaciens subsp. plantarum).